The following is a 122-amino-acid chain: Large ribosomal subunit protein uL14 (122 aa).

Belongs to the universal ribosomal protein uL14 family. Part of the 50S ribosomal subunit. Forms a cluster with proteins L3 and L19. In the 70S ribosome, L14 and L19 interact and together make contacts with the 16S rRNA in bridges B5 and B8.

In terms of biological role, binds to 23S rRNA. Forms part of two intersubunit bridges in the 70S ribosome. In Agathobacter rectalis (strain ATCC 33656 / DSM 3377 / JCM 17463 / KCTC 5835 / VPI 0990) (Eubacterium rectale), this protein is Large ribosomal subunit protein uL14.